Reading from the N-terminus, the 401-residue chain is ATP-dependent RNA helicase FAL1 (401 aa).

A Q motif motif is present at residues 27 to 55; sequence PTFESMSLKENLLRGIYAYGYESPSAVQS. The Helicase ATP-binding domain occupies 58-228; the sequence is IVQVCKGRDT…TKFMTDPVRI (171 aa). Residue 71-78 coordinates ATP; the sequence is AQSGTGKT. A DEAD box motif is present at residues 176 to 179; the sequence is DEAD. Positions 239-400 constitute a Helicase C-terminal domain; the sequence is GLKQYFIAVE…EMPMNVADLI (162 aa).

It belongs to the DEAD box helicase family. DDX48/FAL1 subfamily.

The protein resides in the nucleus. The protein localises to the nucleolus. The enzyme catalyses ATP + H2O = ADP + phosphate + H(+). Functionally, ATP-dependent RNA helicase involved in 40S ribosomal subunit biogenesis. Required for the processing and cleavage of 35S pre-rRNA at sites A0, A1, and A2, leading to mature 18S rRNA. The protein is ATP-dependent RNA helicase FAL1 (FAL1) of Gibberella zeae (strain ATCC MYA-4620 / CBS 123657 / FGSC 9075 / NRRL 31084 / PH-1) (Wheat head blight fungus).